We begin with the raw amino-acid sequence, 321 residues long: Tyrosine recombinase XerC (321 aa).

The Core-binding (CB) domain occupies 16-107; it reads PSIAQEMTRW…GLRSFGRFLE (92 aa). The Tyr recombinase domain occupies 128 to 315; it reads SLPKPLPMAS…DSERLLEVYA (188 aa). Active-site residues include arginine 173, lysine 199, histidine 267, arginine 270, and histidine 293. The active-site O-(3'-phospho-DNA)-tyrosine intermediate is tyrosine 302.

It belongs to the 'phage' integrase family. XerC subfamily. As to quaternary structure, forms a cyclic heterotetrameric complex composed of two molecules of XerC and two molecules of XerD.

Its subcellular location is the cytoplasm. Site-specific tyrosine recombinase, which acts by catalyzing the cutting and rejoining of the recombining DNA molecules. The XerC-XerD complex is essential to convert dimers of the bacterial chromosome into monomers to permit their segregation at cell division. It also contributes to the segregational stability of plasmids. The protein is Tyrosine recombinase XerC of Bradyrhizobium diazoefficiens (strain JCM 10833 / BCRC 13528 / IAM 13628 / NBRC 14792 / USDA 110).